Consider the following 282-residue polypeptide: Protoheme IX farnesyltransferase (282 aa).

Transmembrane regions (helical) follow at residues 9-29, 39-59, 79-99, 102-122, 139-159, 165-185, 210-230, 231-251, and 261-281; these read LAKP…FLLA, LPLF…GCVF, LVTG…LLIL, LVLY…GFIV, VLGG…VVNI, LALF…IAML, IMLF…VLGS, ADLF…YKSI, and VFAK…CLTM.

This sequence belongs to the UbiA prenyltransferase family. Protoheme IX farnesyltransferase subfamily.

The protein resides in the cell inner membrane. The enzyme catalyses heme b + (2E,6E)-farnesyl diphosphate + H2O = Fe(II)-heme o + diphosphate. Its pathway is porphyrin-containing compound metabolism; heme O biosynthesis; heme O from protoheme: step 1/1. Its function is as follows. Converts heme B (protoheme IX) to heme O by substitution of the vinyl group on carbon 2 of heme B porphyrin ring with a hydroxyethyl farnesyl side group. The sequence is that of Protoheme IX farnesyltransferase from Francisella tularensis subsp. holarctica (strain FTNF002-00 / FTA).